A 428-amino-acid chain; its full sequence is Adenylosuccinate synthetase (428 aa).

Residues 12-18 (GDEGKGK) and 40-42 (GHT) contribute to the GTP site. Asp-13 acts as the Proton acceptor in catalysis. The Mg(2+) site is built by Asp-13 and Gly-40. IMP contacts are provided by residues 13-16 (DEGK), 38-41 (NAGH), Thr-128, Arg-142, Gln-223, Thr-238, and Arg-302. His-41 (proton donor) is an active-site residue. 298-304 (TTTGRPR) contacts substrate. GTP contacts are provided by residues Arg-304, 330–332 (SID), and 412–414 (SVG).

This sequence belongs to the adenylosuccinate synthetase family. In terms of assembly, homodimer. Mg(2+) is required as a cofactor.

The protein resides in the cytoplasm. The catalysed reaction is IMP + L-aspartate + GTP = N(6)-(1,2-dicarboxyethyl)-AMP + GDP + phosphate + 2 H(+). The protein operates within purine metabolism; AMP biosynthesis via de novo pathway; AMP from IMP: step 1/2. Its function is as follows. Plays an important role in the de novo pathway of purine nucleotide biosynthesis. Catalyzes the first committed step in the biosynthesis of AMP from IMP. This Shouchella clausii (strain KSM-K16) (Alkalihalobacillus clausii) protein is Adenylosuccinate synthetase.